Consider the following 562-residue polypeptide: uncharacterized protein (562 aa).

5 consecutive transmembrane segments (helical) span residues 10–27 (IYPEIAVFLSLAIGYWVG), 34–53 (FSLGAVTATLLAAVVIGQFD), 63–85 (IFFLMFLFAVGYGIGPQFVQGIA), 92–114 (ALFAVVACLFSLLFPILCAKIAG), and 155–177 (FSVIPVAYAVTYIFGTVGSAIVL). 2 consecutive RCK C-terminal domains span residues 204-288 (TENA…HPDS) and 290-377 (DETQ…QLGV). 6 helical membrane-spanning segments follow: residues 387–404 (VAFWAFAIVIGALLGSLV), 408–430 (GNLPLTLSTAGGVLIAGLIFSWV), 443–465 (PTVWFMNSVGLNVFIAAIGISAG), 475–497 (LGFSLFLWGVVATTLPLFFAALV), 504–526 (FHPAILLGCCAGARTTTASLGMI), and 539–561 (YTITYAVGNTLLTMWGLVLILIL).

The protein belongs to the AAE transporter (TC 2.A.81) family.

It localises to the cell membrane. This is an uncharacterized protein from Shewanella oneidensis (strain ATCC 700550 / JCM 31522 / CIP 106686 / LMG 19005 / NCIMB 14063 / MR-1).